The chain runs to 532 residues: uncharacterized protein (532 aa).

The next 6 membrane-spanning stretches (helical) occupy residues 7-26 (HSSYFSLFLIVALGFMLGRI), 30-52 (GLSLDVSAVIFIALLFGHFGVII), 59-77 (FGLVLFIFTIGIQAGPGFF), 87-109 (LIIITMLIISSACLTAVGLKYAF), 116-134 (VVGLVAGALTSTPGLAVAI), and 139-161 (SPLASIAYGIAYPFGVIGVILFV). RCK C-terminal domains lie at 179 to 262 (LEIE…LVGE) and 263 to 346 (REEG…LLGN). The next 4 helical transmembrane spans lie at 356 to 378 (FFPIAMGIVLGVLFGKLNISFPG), 388 to 410 (GGVLMVALLLSAIGKTGPILWSM), 446 to 468 (GLLLFGVGAAITLVPMLIAAFVG), and 509 to 531 (YATVYPIAMVFLILFIQVIATVV).

It belongs to the AAE transporter (TC 2.A.81) family.

The protein resides in the cell membrane. This is an uncharacterized protein from Bacteroides fragilis (strain YCH46).